Reading from the N-terminus, the 241-residue chain is MAPK phosphothreonine lyase (241 aa).

Residue H106 is the Proton donor of the active site. The Proton acceptor role is filled by K136.

It belongs to the phosphothreonine lyase family.

The protein resides in the secreted. Functionally, secreted effector that irreversibly inactivates host MAP kinases by catalyzing the dephosphorylation of the phosphothreonine residue in the pT-X-pY motif present in MAPKs, via a beta-elimination reaction leading to a dehydrobutyrine residue. The sequence is that of MAPK phosphothreonine lyase (spvC) from Salmonella enteritidis.